The following is a 92-amino-acid chain: Large ribosomal subunit protein eL31 (92 aa).

The protein belongs to the eukaryotic ribosomal protein eL31 family.

The protein is Large ribosomal subunit protein eL31 of Halobacterium salinarum (strain ATCC 29341 / DSM 671 / R1).